A 147-amino-acid polypeptide reads, in one-letter code: uncharacterized protein (147 aa).

The HTH LytTR-type domain maps to 44-147 (LVGYIDKEIH…LKSIKERLSI (104 aa)).

Its subcellular location is the cytoplasm. This is an uncharacterized protein from Staphylococcus aureus (strain Mu50 / ATCC 700699).